The sequence spans 306 residues: Cell division protein ZipA (306 aa).

Residues 1–6 (MENLQL) are Periplasmic-facing. Residues 7–27 (VLLLIGAIAIIAVLVHGFWSI) form a helical membrane-spanning segment. The Cytoplasmic segment spans residues 28–306 (RKQQPKGYKQ…NYIQRIRAQA (279 aa)).

It belongs to the ZipA family. Interacts with FtsZ via their C-terminal domains.

The protein resides in the cell inner membrane. In terms of biological role, essential cell division protein that stabilizes the FtsZ protofilaments by cross-linking them and that serves as a cytoplasmic membrane anchor for the Z ring. Also required for the recruitment to the septal ring of downstream cell division proteins. This is Cell division protein ZipA from Shewanella halifaxensis (strain HAW-EB4).